The sequence spans 237 residues: tRNA (guanine-N(7)-)-methyltransferase (237 aa).

Glutamate 68, glutamate 93, aspartate 120, and aspartate 143 together coordinate S-adenosyl-L-methionine. Residue aspartate 143 is part of the active site. Substrate is bound by residues lysine 147, aspartate 179, and 216–219 (TKFE).

This sequence belongs to the class I-like SAM-binding methyltransferase superfamily. TrmB family.

The catalysed reaction is guanosine(46) in tRNA + S-adenosyl-L-methionine = N(7)-methylguanosine(46) in tRNA + S-adenosyl-L-homocysteine. It participates in tRNA modification; N(7)-methylguanine-tRNA biosynthesis. Its function is as follows. Catalyzes the formation of N(7)-methylguanine at position 46 (m7G46) in tRNA. This Shewanella piezotolerans (strain WP3 / JCM 13877) protein is tRNA (guanine-N(7)-)-methyltransferase.